We begin with the raw amino-acid sequence, 78 residues long: Putative gastrointestinal growth factor xP1 (78 aa).

The N-terminal stretch at 1–23 (MNYKVFCLVAIALIVGSIGSANG) is a signal peptide. The P-type domain maps to 30-73 (EQCSVERLARVNCGYSGITPQECTKQGCCFDSTIQDAPWCFYPR). Disulfide bonds link C32–C58, C42–C57, and C52–C69.

As to expression, stomach mucosa.

It localises to the secreted. Its function is as follows. May act as a growth factor. This is Putative gastrointestinal growth factor xP1 (p1) from Xenopus laevis (African clawed frog).